Reading from the N-terminus, the 457-residue chain is Polygalacturonase-2 (457 aa).

The first 24 residues, 1 to 24 (MVIQRNSILLLIIIFASSISTCRS), serve as a signal peptide directing secretion. Positions 25 to 71 (NVIDDNLFKQVYDNILEQEFAHDFQAYLSYLSKNIESNNNIDKVDKN) are excised as a propeptide. Asn189 and Asn240 each carry an N-linked (GlcNAc...) asparagine glycan. 2 PbH1 repeats span residues 228–255 (SCTN…HVSN) and 256–277 (TQYI…SIVS). The Proton donor role is filled by Asp270. Asn286 carries an N-linked (GlcNAc...) asparagine glycan. The active site involves His293. PbH1 repeat units follow at residues 309–330 (VSNV…RIKT) and 338–359 (ASNI…IIDQ). The N-linked (GlcNAc...) asparagine glycan is linked to Asn311. Residues 445–457 (LEISEDEALLYNY) constitute a propeptide that is removed on maturation.

The protein belongs to the glycosyl hydrolase 28 family. Monomer PG2 (isoenzymes PG2A and PG2B). Also forms heterodimers called polygalacturonase 1 (PG1) with the beta subunit GP1. Post-translationally, N-glycosylated. PG2B isozyme has a greater degree of glycosylation than PG2A. As to expression, expressed only in ripening fruits (at protein level).

It is found in the secreted. It localises to the extracellular space. The protein localises to the apoplast. The protein resides in the cell wall. The enzyme catalyses (1,4-alpha-D-galacturonosyl)n+m + H2O = (1,4-alpha-D-galacturonosyl)n + (1,4-alpha-D-galacturonosyl)m.. In terms of biological role, catalytic subunit of the polygalacturonase isozyme 1 and 2 (PG1 and PG2). Acts in concert with the pectinesterase, in the ripening process. Is involved in cell wall metabolism, specifically in polyuronide degradation. The depolymerization and solubilization of cell wall polyuronides mediated by PG2 during ripening seems to be limited by the beta subunit GP1, probably by recruiting PG2 to form PG1. In Solanum lycopersicum (Tomato), this protein is Polygalacturonase-2 (PG2).